Consider the following 139-residue polypeptide: Putative pre-16S rRNA nuclease (139 aa).

Belongs to the YqgF nuclease family.

The protein localises to the cytoplasm. Could be a nuclease involved in processing of the 5'-end of pre-16S rRNA. The protein is Putative pre-16S rRNA nuclease of Thermoanaerobacter pseudethanolicus (strain ATCC 33223 / 39E) (Clostridium thermohydrosulfuricum).